A 330-amino-acid chain; its full sequence is LIM domain-containing protein pin-2 (330 aa).

LIM zinc-binding domains follow at residues 21 to 73 (CERC…CEHD), 82 to 132 (CAKC…CFLC), 144 to 194 (CNKC…CPRC), 202 to 255 (CFDC…CRDD), and 264 to 315 (CFIC…CKKC).

As to expression, expressed in neurons and intestine.

It localises to the cytoplasm. The protein localises to the nucleus. The polypeptide is LIM domain-containing protein pin-2 (pin-2) (Caenorhabditis elegans).